We begin with the raw amino-acid sequence, 429 residues long: Trigger factor (429 aa).

The 86-residue stretch at G164–P249 folds into the PPIase FKBP-type domain.

It belongs to the FKBP-type PPIase family. Tig subfamily.

It localises to the cytoplasm. The enzyme catalyses [protein]-peptidylproline (omega=180) = [protein]-peptidylproline (omega=0). In terms of biological role, involved in protein export. Acts as a chaperone by maintaining the newly synthesized protein in an open conformation. Functions as a peptidyl-prolyl cis-trans isomerase. This is Trigger factor from Anaeromyxobacter dehalogenans (strain 2CP-C).